A 60-amino-acid chain; its full sequence is Large ribosomal subunit protein bL32 (60 aa).

The segment at Met-1 to Ala-60 is disordered. Composition is skewed to basic residues over residues Ser-9–His-19 and Arg-49–Ala-60.

This sequence belongs to the bacterial ribosomal protein bL32 family.

This chain is Large ribosomal subunit protein bL32, found in Polaromonas sp. (strain JS666 / ATCC BAA-500).